Here is a 398-residue protein sequence, read N- to C-terminus: Endoglucanase (398 aa).

A signal peptide spans 1 to 23; sequence MSPLKCMALAALGAVMFVGSAQA. The active-site Proton donor is the Glu58. The active-site Nucleophile is Asp119.

Belongs to the glycosyl hydrolase 8 (cellulase D) family.

The protein resides in the secreted. The catalysed reaction is Endohydrolysis of (1-&gt;4)-beta-D-glucosidic linkages in cellulose, lichenin and cereal beta-D-glucans.. Its pathway is glycan metabolism; bacterial cellulose biosynthesis. Hydrolyzes carboxymethylcellulose. The chain is Endoglucanase (bcsZ) from Pseudomonas fluorescens (strain SBW25).